Consider the following 76-residue polypeptide: Kappa-actitoxin-Avd4c (76 aa).

Positions 1–19 (MNKALFLCLVVLCAAVVFA) are cleaved as a signal peptide. A propeptide spanning residues 20-31 (AEDLQKAKHAPF) is cleaved from the precursor. Disulfide bonds link Cys-37/Cys-72, Cys-39/Cys-65, and Cys-55/Cys-73.

This sequence belongs to the sea anemone type 3 (BDS) potassium channel toxin family. In terms of tissue distribution, moderately expressed in the ectodermal tissue from the distal and proximal tentacles, body wall, and oral disk.

The protein resides in the secreted. It localises to the nematocyst. Blocks Kv3 voltage-gated potassium channels. Reduces blood pressure. The polypeptide is Kappa-actitoxin-Avd4c (Anemonia viridis (Snakelocks anemone)).